A 168-amino-acid polypeptide reads, in one-letter code: Protein archease (168 aa).

Ala2 is subject to N-acetylalanine. Ca(2+) is bound by residues Asp39, Asp167, and Ile168.

The protein belongs to the archease family. As to quaternary structure, component of the tRNA-splicing ligase complex.

Its function is as follows. Component of the tRNA-splicing ligase complex required to facilitate the enzymatic turnover of catalytic subunit RTCB. Together with DDX1, acts by facilitating the guanylylation of RTCB, a key intermediate step in tRNA ligation. The sequence is that of Protein archease (Zbtb8os) from Mus musculus (Mouse).